A 357-amino-acid chain; its full sequence is Type II methyltransferase M1.HgaI (357 aa).

The SAM-dependent MTase C5-type domain maps to 5–357; the sequence is IMGLSLFSSA…NITREIFNEN (353 aa). Cys83 is an active-site residue.

It belongs to the class I-like SAM-binding methyltransferase superfamily. C5-methyltransferase family.

It carries out the reaction a 2'-deoxycytidine in DNA + S-adenosyl-L-methionine = a 5-methyl-2'-deoxycytidine in DNA + S-adenosyl-L-homocysteine + H(+). A methylase that recognizes DNA with the sequence 5'-GCGTC-3', methylates C-2, and protects the DNA from cleavage by the HgaI endonuclease. The protein is Type II methyltransferase M1.HgaI (hgaIAM) of Avibacterium volantium (Pasteurella volantium).